The sequence spans 205 residues: FAS-associated death domain protein (205 aa).

The region spanning 3-81 is the DED domain; it reads PFLVLLHSLS…RHDLLQRLDD (79 aa). In terms of domain architecture, Death spans 97 to 181; it reads LQVAFDIVCD…LVADLVEEAQ (85 aa). The disordered stretch occupies residues 181–205; sequence QESVSKSENMSPVLRDSTVSSSETP. Phosphoserine is present on serine 191.

Can self-associate. Component of the AIM2 PANoptosome complex, a multiprotein complex that drives inflammatory cell death (PANoptosis). Component of the death-induced signaling complex (DISC) composed of cell surface receptor FAS/CD95 or TNFRSF1A, adapter protein FADD and the CASP8 protease; recruitment of CASP8 to the complex is required for processing of CASP8 into the p18 and p10 subunits. Interacts (via death domain) with FAS (via death domain). Interacts directly (via DED domain) with NOL3 (via CARD domain); inhibits death-inducing signaling complex (DISC) assembly by inhibiting the increase in FAS-FADD binding induced by FAS activation. Interacts with CFLAR, PEA15 and MBD4. When phosphorylated, part of a complex containing HIPK3 and FAS. May interact with MAVS/IPS1. Interacts with MOCV v-CFLAR protein and PIDD1. Interacts with RIPK1 and TRADD. Interacts with stimulated TNFRSF10B. Interacts with DDX24.

The protein localises to the cytoplasm. Apoptotic adapter molecule that recruits caspases CASP8 or CASP10 to the activated FAS/CD95 or TNFRSF1A/TNFR-1 receptors. The resulting aggregate called the death-inducing signaling complex (DISC) performs CASP8 proteolytic activation. Active CASP8 initiates the subsequent cascade of caspases mediating apoptosis. Involved in interferon-mediated antiviral immune response, playing a role in the positive regulation of interferon signaling. This is FAS-associated death domain protein from Mus musculus (Mouse).